The chain runs to 396 residues: Phosphoglycerate kinase (396 aa).

Substrate is bound by residues 21–23 (DFN), arginine 36, 59–62 (HLGK), arginine 119, and arginine 156. Residues lysine 206, glutamate 325, and 352-355 (GGDS) each bind ATP.

This sequence belongs to the phosphoglycerate kinase family. Monomer.

The protein resides in the cytoplasm. The enzyme catalyses (2R)-3-phosphoglycerate + ATP = (2R)-3-phospho-glyceroyl phosphate + ADP. Its pathway is carbohydrate degradation; glycolysis; pyruvate from D-glyceraldehyde 3-phosphate: step 2/5. The polypeptide is Phosphoglycerate kinase (Staphylococcus carnosus (strain TM300)).